Consider the following 208-residue polypeptide: Large ribosomal subunit protein uL3c (208 aa).

Residues 129 to 165 (TRGPMTHGSKNHREPGSIGQGSTPGKVHKGKKMAGRL) form a disordered region.

This sequence belongs to the universal ribosomal protein uL3 family. In terms of assembly, part of the 50S ribosomal subunit.

Its subcellular location is the plastid. It localises to the chloroplast. Functionally, one of the primary rRNA binding proteins, it binds directly near the 3'-end of the 23S rRNA, where it nucleates assembly of the 50S subunit. This is Large ribosomal subunit protein uL3c (rpl3) from Rhodomonas salina (Cryptomonas salina).